A 483-amino-acid polypeptide reads, in one-letter code: Glucose-1-phosphate adenylyltransferase large subunit 3, chloroplastic/amyloplastic (483 aa).

It belongs to the bacterial/plant glucose-1-phosphate adenylyltransferase family. In terms of assembly, heterotetramer. Tubers.

It localises to the plastid. It is found in the chloroplast. The protein resides in the amyloplast. It carries out the reaction alpha-D-glucose 1-phosphate + ATP + H(+) = ADP-alpha-D-glucose + diphosphate. Its pathway is glycan biosynthesis; starch biosynthesis. Activated by 3'phosphoglycerate, inhibited by orthophosphate. Allosteric regulation. Its function is as follows. This protein plays a role in synthesis of starch. It catalyzes the synthesis of the activated glycosyl donor, ADP-glucose from Glc-1-P and ATP. In Solanum tuberosum (Potato), this protein is Glucose-1-phosphate adenylyltransferase large subunit 3, chloroplastic/amyloplastic (AGPS3).